The following is a 359-amino-acid chain: MRKIIHIDMDCYFAAVEMRDFPEYRGKPLAVGGSRVQRGVISTCNYEARKFGVRSAMATGYALKLCPDLILVPGRMQVYKEVSQQIRAIFSRYTELIEPLSLDEAYLDVSDCKLFKGSATLIAEAIRRDILAETGLTASAGVAPIKFLAKVASDLNKPNGQCVIPPDEVPEFVKSLSLRKIPGVGKVTAEKLSSLGLNTCADVQAYPKQELIARFGKFGAVLVERAHGIDDRGISVSRERKSVGVETTLAQDIYTLEQCQQVMPGLIQELSSRLGRSAKGRQIHKQVVKLKFNDFKQTTIEHRSDEVSVVMFYELLSQAMARQEGRGIRLLGVSVGLAESKDTLAPLMVRETKQLDFVF.

A UmuC domain is found at 4 to 185 (IIHIDMDCYF…LSLRKIPGVG (182 aa)). The Mg(2+) site is built by D8 and D103. E104 is a catalytic residue.

The protein belongs to the DNA polymerase type-Y family. Monomer. It depends on Mg(2+) as a cofactor.

It is found in the cytoplasm. It carries out the reaction DNA(n) + a 2'-deoxyribonucleoside 5'-triphosphate = DNA(n+1) + diphosphate. Poorly processive, error-prone DNA polymerase involved in untargeted mutagenesis. Copies undamaged DNA at stalled replication forks, which arise in vivo from mismatched or misaligned primer ends. These misaligned primers can be extended by PolIV. Exhibits no 3'-5' exonuclease (proofreading) activity. May be involved in translesional synthesis, in conjunction with the beta clamp from PolIII. This is DNA polymerase IV from Shewanella sp. (strain MR-7).